The following is a 94-amino-acid chain: Small ribosomal subunit protein bS16c (94 aa).

The protein belongs to the bacterial ribosomal protein bS16 family.

It localises to the plastid. Its subcellular location is the chloroplast. In Phalaenopsis aphrodite subsp. formosana (Moth orchid), this protein is Small ribosomal subunit protein bS16c.